The chain runs to 186 residues: Elongation factor P (186 aa).

Belongs to the elongation factor P family.

The protein resides in the cytoplasm. The protein operates within protein biosynthesis; polypeptide chain elongation. In terms of biological role, involved in peptide bond synthesis. Stimulates efficient translation and peptide-bond synthesis on native or reconstituted 70S ribosomes in vitro. Probably functions indirectly by altering the affinity of the ribosome for aminoacyl-tRNA, thus increasing their reactivity as acceptors for peptidyl transferase. The chain is Elongation factor P from Polynucleobacter asymbioticus (strain DSM 18221 / CIP 109841 / QLW-P1DMWA-1) (Polynucleobacter necessarius subsp. asymbioticus).